A 123-amino-acid polypeptide reads, in one-letter code: Holo-[acyl-carrier-protein] synthase (123 aa).

Mg(2+)-binding residues include Asp8 and Glu60.

It belongs to the P-Pant transferase superfamily. AcpS family. Requires Mg(2+) as cofactor.

It localises to the cytoplasm. The enzyme catalyses apo-[ACP] + CoA = holo-[ACP] + adenosine 3',5'-bisphosphate + H(+). In terms of biological role, transfers the 4'-phosphopantetheine moiety from coenzyme A to a Ser of acyl-carrier-protein. The chain is Holo-[acyl-carrier-protein] synthase from Ehrlichia chaffeensis (strain ATCC CRL-10679 / Arkansas).